The following is a 223-amino-acid chain: UPF0173 metal-dependent hydrolase THA_544 (223 aa).

Belongs to the UPF0173 family.

This chain is UPF0173 metal-dependent hydrolase THA_544, found in Thermosipho africanus (strain TCF52B).